The sequence spans 157 residues: Phosphopantetheine adenylyltransferase (157 aa).

Residue serine 8 coordinates substrate. Residues 8–9 (SF) and histidine 16 contribute to the ATP site. Substrate-binding residues include lysine 40, threonine 72, and arginine 86. ATP contacts are provided by residues 87-89 (GLR), glutamate 97, and 122-128 (YSFLSSS).

It belongs to the bacterial CoaD family. In terms of assembly, homohexamer. Requires Mg(2+) as cofactor.

It localises to the cytoplasm. It carries out the reaction (R)-4'-phosphopantetheine + ATP + H(+) = 3'-dephospho-CoA + diphosphate. It participates in cofactor biosynthesis; coenzyme A biosynthesis; CoA from (R)-pantothenate: step 4/5. Functionally, reversibly transfers an adenylyl group from ATP to 4'-phosphopantetheine, yielding dephospho-CoA (dPCoA) and pyrophosphate. The polypeptide is Phosphopantetheine adenylyltransferase (Gloeothece citriformis (strain PCC 7424) (Cyanothece sp. (strain PCC 7424))).